A 646-amino-acid polypeptide reads, in one-letter code: MSKTRVYQIAEELNISNEELINKLAELDINVTDKDSVLEGEELELALEMLGEDLSQENGNVIEIDGKLTVQVLATKLDKSPSEIIMKLMKMGTMATINQEISFEIAALAAKDYGFELTVAESDDTEALEIEALMEIEEDKEEDLKPRPPVVTVMGHVDHGKTSLLDAIRKTDVISGEAGGITQHIGASEVKINGHKIVFLDTPGHEAFTSMRARGAQVTDIAILVVAADDGIMPQTVEAINHAKAAGVPLIVAINKIDKPGANPDKVKQELADQGLLVEDWGGEVIAVPVSAKKKEGIDTLLEMVLLVAEMEELRANPNKRAVGTVIEAELDKGRGPVATVLVQGGTLTVGDPIVAGVACGKVRAMINAKGKRVKTAGPSTAVEILGLSEVPQGGDQFVEVPTDKIARSVAARRQQIVRDEMLKSTQRLSLDALFSQMSEGSIKDLNIVIKADVQGSVQAVKQSLEKLSNEEVQVKVIHGGVGAVTESDILLAAASNAIIIGFNVRPVPGAESLGEKENVDIRTYTIIYKAIEDIQAAMTGMLDPEYVDEETGKAEIREIYKISGVGTVAGCYVTNGKIFRNCKVRLVRDSIIIHEGELAALKRFKDDVKEVNSGYECGMSFVNYNDIKEGDIVEAYITKEVERKL.

The 170-residue stretch at 146-315 (PRPPVVTVMG…LLVAEMEELR (170 aa)) folds into the tr-type G domain. The G1 stretch occupies residues 155–162 (GHVDHGKT). 155–162 (GHVDHGKT) contributes to the GTP binding site. Residues 180 to 184 (GITQH) are G2. Residues 201-204 (DTPG) form a G3 region. GTP-binding positions include 201 to 205 (DTPGH) and 255 to 258 (NKID). The segment at 255–258 (NKID) is G4. The interval 291–293 (SAK) is G5.

The protein belongs to the TRAFAC class translation factor GTPase superfamily. Classic translation factor GTPase family. IF-2 subfamily.

Its subcellular location is the cytoplasm. In terms of biological role, one of the essential components for the initiation of protein synthesis. Protects formylmethionyl-tRNA from spontaneous hydrolysis and promotes its binding to the 30S ribosomal subunits. Also involved in the hydrolysis of GTP during the formation of the 70S ribosomal complex. This is Translation initiation factor IF-2 from Clostridioides difficile (strain 630) (Peptoclostridium difficile).